Here is a 292-residue protein sequence, read N- to C-terminus: Calcium-binding protein CBP (292 aa).

Residues 1 to 80 are disordered; it reads MAGYPPNPGS…YGSGGGYGAP (80 aa). The span at 12–21 shows a compositional bias: gly residues; sequence YPYGGAGGYG. Residues 22–40 show a composition bias toward pro residues; the sequence is APPPPYGSSPAPSAPPYGA. EF-hand domains are found at residues 121 to 156 and 187 to 222; these read GTDP…YSQS and YSLQ…LGYS. Residues Asp134, Asp136, Ser138, Met140, Glu145, Asp200, Asp202, Ser204, Lys206, and Glu211 each contribute to the Ca(2+) site.

Its function is as follows. Potential calcium sensor. The polypeptide is Calcium-binding protein CBP (Oryza sativa subsp. japonica (Rice)).